Reading from the N-terminus, the 583-residue chain is Aspartate--tRNA ligase (583 aa).

L-aspartate is bound at residue Glu174. The segment at 198–201 (QITK) is aspartate. Residue Arg220 coordinates L-aspartate. Residues 220 to 222 (RDE) and Gln229 contribute to the ATP site. Residue His443 coordinates L-aspartate. An ATP-binding site is contributed by Glu477. An L-aspartate-binding site is contributed by Arg484. 529-532 (GLDR) serves as a coordination point for ATP.

This sequence belongs to the class-II aminoacyl-tRNA synthetase family. Type 1 subfamily. In terms of assembly, homodimer.

It is found in the cytoplasm. The catalysed reaction is tRNA(Asp) + L-aspartate + ATP = L-aspartyl-tRNA(Asp) + AMP + diphosphate. Catalyzes the attachment of L-aspartate to tRNA(Asp) in a two-step reaction: L-aspartate is first activated by ATP to form Asp-AMP and then transferred to the acceptor end of tRNA(Asp). The chain is Aspartate--tRNA ligase from Streptococcus thermophilus (strain CNRZ 1066).